The primary structure comprises 118 residues: MARIAGINIPDHKHTVIALTAIFGIGKTRSKAICAETGIAENVKISELSEEQIDILREAVGKFVVEGDLRREITLSIKRLMDLGCYRGLRHRRGLPVRGQRTKTNARTRKGPRKPIKK.

A disordered region spans residues 94 to 118; the sequence is GLPVRGQRTKTNARTRKGPRKPIKK.

It belongs to the universal ribosomal protein uS13 family. Part of the 30S ribosomal subunit. Forms a loose heterodimer with protein S19. Forms two bridges to the 50S subunit in the 70S ribosome.

Its function is as follows. Located at the top of the head of the 30S subunit, it contacts several helices of the 16S rRNA. In the 70S ribosome it contacts the 23S rRNA (bridge B1a) and protein L5 of the 50S subunit (bridge B1b), connecting the 2 subunits; these bridges are implicated in subunit movement. Contacts the tRNAs in the A and P-sites. The protein is Small ribosomal subunit protein uS13 of Klebsiella pneumoniae (strain 342).